The following is a 248-amino-acid chain: Triosephosphate isomerase (248 aa).

Substrate contacts are provided by asparagine 11 and lysine 13. Histidine 95 serves as the catalytic Electrophile. Glutamate 165 serves as the catalytic Proton acceptor.

The protein belongs to the triosephosphate isomerase family. In terms of assembly, homodimer.

The protein resides in the cytoplasm. It catalyses the reaction dihydroxyacetone phosphate = methylglyoxal + phosphate. The catalysed reaction is D-glyceraldehyde 3-phosphate = dihydroxyacetone phosphate. The protein operates within carbohydrate degradation; glycolysis; D-glyceraldehyde 3-phosphate from glycerone phosphate: step 1/1. Its pathway is carbohydrate biosynthesis; gluconeogenesis. Functionally, triosephosphate isomerase is an extremely efficient metabolic enzyme that catalyzes the interconversion between dihydroxyacetone phosphate (DHAP) and D-glyceraldehyde-3-phosphate (G3P) in glycolysis and gluconeogenesis. It is also responsible for the non-negligible production of methylglyoxal a reactive cytotoxic side-product that modifies and can alter proteins, DNA and lipids. This Xenopus tropicalis (Western clawed frog) protein is Triosephosphate isomerase (tpi1).